The sequence spans 1036 residues: Isoleucine--tRNA ligase (1036 aa).

A 'HIGH' region motif is present at residues 46 to 56 (PFATGLPHYGH). The 'KMSKS' region motif lies at 589-593 (KMSKR). Position 592 (K592) interacts with ATP.

Belongs to the class-I aminoacyl-tRNA synthetase family. IleS type 2 subfamily. As to quaternary structure, monomer. The cofactor is Zn(2+).

The protein resides in the cytoplasm. The enzyme catalyses tRNA(Ile) + L-isoleucine + ATP = L-isoleucyl-tRNA(Ile) + AMP + diphosphate. Its function is as follows. Catalyzes the attachment of isoleucine to tRNA(Ile). As IleRS can inadvertently accommodate and process structurally similar amino acids such as valine, to avoid such errors it has two additional distinct tRNA(Ile)-dependent editing activities. One activity is designated as 'pretransfer' editing and involves the hydrolysis of activated Val-AMP. The other activity is designated 'posttransfer' editing and involves deacylation of mischarged Val-tRNA(Ile). The sequence is that of Isoleucine--tRNA ligase from Chlamydia trachomatis serovar L2 (strain ATCC VR-902B / DSM 19102 / 434/Bu).